The primary structure comprises 140 residues: uncharacterized protein (140 aa).

Asn36 is a glycosylation site (N-linked (GlcNAc...) asparagine). The chain crosses the membrane as a helical span at residues 91–107 (LFMSLIGLCVCYMNLVF). The segment covering 113-122 (QPSSSGSKGN) has biased composition (polar residues). The segment at 113-140 (QPSSSGSKGNTETTIETTTEVETETAKQ) is disordered. The segment covering 131-140 (TEVETETAKQ) has biased composition (acidic residues).

It is found in the endoplasmic reticulum membrane. This is an uncharacterized protein from Saccharomyces cerevisiae (strain ATCC 204508 / S288c) (Baker's yeast).